Consider the following 151-residue polypeptide: MSSESRSASSPVAPDDIEEGVVLRPKFDAHGLVTVVATDARTGDVLMVAFMNGEALDRTIQTGEAWYYSRSRKRLWKKGETSGHIQKVLEMRVDCDQDAVWIKVDQTGGAACHTGRHSCFYRRIDRGGDGAPVLIETDSERKFDPDKVYGK.

D94 serves as a coordination point for Mg(2+). C95 provides a ligand contact to Zn(2+). Mg(2+) contacts are provided by D96 and D98. The Zn(2+) site is built by C112 and C119.

Belongs to the PRA-CH family. As to quaternary structure, homodimer. Requires Mg(2+) as cofactor. Zn(2+) is required as a cofactor.

Its subcellular location is the cytoplasm. The enzyme catalyses 1-(5-phospho-beta-D-ribosyl)-5'-AMP + H2O = 1-(5-phospho-beta-D-ribosyl)-5-[(5-phospho-beta-D-ribosylamino)methylideneamino]imidazole-4-carboxamide. The protein operates within amino-acid biosynthesis; L-histidine biosynthesis; L-histidine from 5-phospho-alpha-D-ribose 1-diphosphate: step 3/9. Its function is as follows. Catalyzes the hydrolysis of the adenine ring of phosphoribosyl-AMP. This Rhodopseudomonas palustris (strain ATCC BAA-98 / CGA009) protein is Phosphoribosyl-AMP cyclohydrolase.